Consider the following 99-residue polypeptide: Plastocyanin (99 aa).

The region spanning 1–99 is the Plastocyanin-like domain; it reads IEVLLGSDDG…AGMVGKVTVN (99 aa). His37, Cys84, His87, and Met92 together coordinate Cu cation.

The protein belongs to the plastocyanin family. It depends on Cu(2+) as a cofactor.

The protein resides in the plastid. The protein localises to the chloroplast thylakoid membrane. Functionally, participates in electron transfer between P700 and the cytochrome b6-f complex in photosystem I. In Solanum crispum (Chilean potato-tree), this protein is Plastocyanin (PETE).